A 306-amino-acid polypeptide reads, in one-letter code: Erythromycin 3''-O-methyltransferase (306 aa).

The S-adenosyl-L-methionine site is built by Leu157 and His162.

It belongs to the methyltransferase superfamily.

It catalyses the reaction erythromycin C + S-adenosyl-L-methionine = erythromycin A + S-adenosyl-L-homocysteine + H(+). The catalysed reaction is erythromycin D + S-adenosyl-L-methionine = erythromycin B + S-adenosyl-L-homocysteine + H(+). It functions in the pathway antibiotic biosynthesis; erythromycin biosynthesis. S-adenosyl-L-methionine-dependent O-methyltransferase that catalyzes the last step in the erythromycin biosynthesis pathway. Methylates the position 3 of the mycarosyl moiety of erythromycin C, forming the most active form of the antibiotic, erythromycin A. Can also methylate the precursor erythromycin D, forming erythromycin B. This chain is Erythromycin 3''-O-methyltransferase (eryG), found in Saccharopolyspora erythraea (strain ATCC 11635 / DSM 40517 / JCM 4748 / NBRC 13426 / NCIMB 8594 / NRRL 2338).